The chain runs to 264 residues: Glyceraldehyde-3-phosphate dehydrogenase (264 aa).

NAD(+) contacts are provided by Arg45 and Thr93. D-glyceraldehyde 3-phosphate is bound by residues 123-125 (SCT) and Thr154. Residue Cys124 is the Nucleophile of the active site. An NAD(+)-binding site is contributed by Asn155. D-glyceraldehyde 3-phosphate is bound by residues Arg169, 182-183 (TG), and Arg205. Residues 245–264 (GILGYTEDPXVSSDXKGNSH) are disordered.

Belongs to the glyceraldehyde-3-phosphate dehydrogenase family. As to quaternary structure, homotetramer.

The protein resides in the cytoplasm. It catalyses the reaction D-glyceraldehyde 3-phosphate + phosphate + NAD(+) = (2R)-3-phospho-glyceroyl phosphate + NADH + H(+). The protein operates within carbohydrate degradation; glycolysis; pyruvate from D-glyceraldehyde 3-phosphate: step 1/5. Its function is as follows. Catalyzes the oxidative phosphorylation of glyceraldehyde 3-phosphate (G3P) to 1,3-bisphosphoglycerate (BPG) using the cofactor NAD. The first reaction step involves the formation of a hemiacetal intermediate between G3P and a cysteine residue, and this hemiacetal intermediate is then oxidized to a thioester, with concomitant reduction of NAD to NADH. The reduced NADH is then exchanged with the second NAD, and the thioester is attacked by a nucleophilic inorganic phosphate to produce BPG. This chain is Glyceraldehyde-3-phosphate dehydrogenase (gap), found in Borrelia hermsii.